A 379-amino-acid chain; its full sequence is Homoserine O-succinyltransferase (379 aa).

An AB hydrolase-1 domain is found at 51 to 360 (NAVLICHALS…DAPQGHDAFL (310 aa)). Residue S157 is the Nucleophile of the active site. R227 contacts substrate. Active-site residues include D323 and H356. D357 is a substrate binding site.

This sequence belongs to the AB hydrolase superfamily. MetX family. As to quaternary structure, homodimer.

Its subcellular location is the cytoplasm. The catalysed reaction is L-homoserine + succinyl-CoA = O-succinyl-L-homoserine + CoA. It participates in amino-acid biosynthesis; L-methionine biosynthesis via de novo pathway; O-succinyl-L-homoserine from L-homoserine: step 1/1. Transfers a succinyl group from succinyl-CoA to L-homoserine, forming succinyl-L-homoserine. The protein is Homoserine O-succinyltransferase of Pseudomonas paraeruginosa (strain DSM 24068 / PA7) (Pseudomonas aeruginosa (strain PA7)).